The primary structure comprises 162 residues: RNA pyrophosphohydrolase (162 aa).

The region spanning 7–149 (KYRPCVGIML…KKEVYKTVIE (143 aa)) is the Nudix hydrolase domain. The Nudix box motif lies at 40-61 (GGVDDGEELEQAALRELLEEVG).

The protein belongs to the Nudix hydrolase family. RppH subfamily. Requires a divalent metal cation as cofactor.

Its function is as follows. Accelerates the degradation of transcripts by removing pyrophosphate from the 5'-end of triphosphorylated RNA, leading to a more labile monophosphorylated state that can stimulate subsequent ribonuclease cleavage. This Wolbachia sp. subsp. Drosophila simulans (strain wRi) protein is RNA pyrophosphohydrolase.